Reading from the N-terminus, the 439-residue chain is Glutamine synthetase (439 aa).

The GS beta-grasp domain occupies 13-98 (ENVRFIRLQF…VICDVYTPDG (86 aa)). The GS catalytic domain maps to 105-439 (PRYRLRRMME…NWELQRYLYL (335 aa)). Mg(2+) is bound by residues glutamate 128 and glutamate 130. Glutamate 180 contacts ATP. Glutamate 185 and glutamate 192 together coordinate Mg(2+). Residues 236–237 (NG) and glycine 237 each bind L-glutamate. Mg(2+) is bound at residue histidine 241. Residues 243–245 (HMS) and serine 245 contribute to the ATP site. L-glutamate contacts are provided by arginine 294, glutamate 300, and arginine 312. Positions 312, 317, and 324 each coordinate ATP. Position 329 (glutamate 329) interacts with Mg(2+). Residue arginine 331 coordinates L-glutamate.

It belongs to the glutamine synthetase family. In terms of assembly, oligomer of 12 subunits arranged in the form of two hexagons. In its feedback-inhibited form, interacts with TnrA in order to block its DNA-binding activity. Mg(2+) is required as a cofactor.

It localises to the cytoplasm. The enzyme catalyses L-glutamate + NH4(+) + ATP = L-glutamine + ADP + phosphate + H(+). Inhibited by glutamine. Its function is as follows. Glutamine synthetase (GS) is an unusual multitasking protein that functions as an enzyme, a transcription coregulator, and a chaperone in ammonium assimilation and in the regulation of genes involved in nitrogen metabolism. It catalyzes the ATP-dependent biosynthesis of glutamine from glutamate and ammonia. Feedback-inhibited GlnA also interacts with and regulates the activity of the transcriptional regulator TnrA. During nitrogen limitation, TnrA is in its DNA-binding active state and turns on the transcription of genes required for nitrogen assimilation. Under conditions of nitrogen excess, feedback-inhibited GlnA forms a stable complex with TnrA, which inhibits its DNA-binding activity. In contrast, feedback-inhibited GlnA acts as a chaperone to stabilize the DNA-binding activity of GlnR, which represses the transcription of nitrogen assimilation genes. This Thermotoga maritima (strain ATCC 43589 / DSM 3109 / JCM 10099 / NBRC 100826 / MSB8) protein is Glutamine synthetase.